Consider the following 389-residue polypeptide: Alpha carbonic anhydrase 8 (389 aa).

An N-terminal signal peptide occupies residues 1–22; sequence MKISSLGWVLVLIFISITIVSS. The interval 21 to 153 is disordered; sequence SSAPAPKPPK…TKGNKGPAKW (133 aa). Over residues 25–129 the composition is skewed to pro residues; that stretch reads APKPPKPKPA…PKPKPAPKPA (105 aa). Positions 138 to 374 constitute an Alpha-carbonic anhydrase domain; sequence TEFSYETKGN…VNKRKVYLYK (237 aa). Cysteine 163 and cysteine 324 form a disulfide bridge. Asparagine 196 is a glycosylation site (N-linked (GlcNAc...) asparagine). Residue histidine 204 is the Proton acceptor of the active site. Zn(2+) contacts are provided by histidine 232, histidine 234, and histidine 251. 320-321 lines the substrate pocket; it reads TA. Asparagine 385 is a glycosylation site (N-linked (GlcNAc...) asparagine).

The protein belongs to the alpha-class carbonic anhydrase family. Zn(2+) serves as cofactor. Post-translationally, N-glycosylated.

The protein resides in the plastid. It localises to the chloroplast stroma. It catalyses the reaction hydrogencarbonate + H(+) = CO2 + H2O. Functionally, reversible hydration of carbon dioxide. This is Alpha carbonic anhydrase 8 (ACA8) from Arabidopsis thaliana (Mouse-ear cress).